A 245-amino-acid chain; its full sequence is E3 ubiquitin-protein ligase RNF138 (245 aa).

Ala2 bears the N-acetylalanine mark. Residues 18 to 58 form an RING-type zinc finger; it reads CPVCQEVLKTPVRTTACQHVFCRKCFLTAMRESGAHCPLCR. Zn(2+)-binding residues include Cys86, Cys89, His101, and Cys105. Residues 86–105 form a C2HC RNF-type zinc finger; the sequence is CRCCAKQIKFYRMRHHYKSC. The tract at residues 125–154 is disordered; that stretch reads QDSVGNSNRSETSTSDNTETYQENTSSSGH. Thr142 carries the phosphothreonine modification. 2 C2H2-type zinc fingers span residues 157-180 and 187-215; these read FKCP…NSNH and VTCP…NQRH. The UIM domain maps to 225 to 243; that stretch reads LQLDEETQYQTAVEESFQV.

Interacts with NLK. Interacts with XRCC5/Ku80. Interacts with RBBP8/CtIP. Auto-ubiquitinated.

The protein localises to the chromosome. The catalysed reaction is S-ubiquitinyl-[E2 ubiquitin-conjugating enzyme]-L-cysteine + [acceptor protein]-L-lysine = [E2 ubiquitin-conjugating enzyme]-L-cysteine + N(6)-ubiquitinyl-[acceptor protein]-L-lysine.. It functions in the pathway protein modification; protein ubiquitination. Its function is as follows. E3 ubiquitin-protein ligase involved in DNA damage response by promoting DNA resection and homologous recombination. Recruited to sites of double-strand breaks following DNA damage and specifically promotes double-strand break repair via homologous recombination. Two different, non-exclusive, mechanisms have been proposed. According to a report, regulates the choice of double-strand break repair by favoring homologous recombination over non-homologous end joining (NHEJ): acts by mediating ubiquitination of XRCC5/Ku80, leading to remove the Ku complex from DNA breaks, thereby promoting homologous recombination. According to another report, cooperates with UBE2Ds E2 ubiquitin ligases (UBE2D1, UBE2D2, UBE2D3 or UBE2D4) to promote homologous recombination by mediating ubiquitination of RBBP8/CtIP. Together with NLK, involved in the ubiquitination and degradation of TCF/LEF. Also exhibits auto-ubiquitination activity in combination with UBE2K. May act as a negative regulator in the Wnt/beta-catenin-mediated signaling pathway. This Homo sapiens (Human) protein is E3 ubiquitin-protein ligase RNF138.